The following is a 277-amino-acid chain: F-actin-capping protein subunit beta isoforms 1 and 2 (277 aa).

At Ser-2 the chain carries N-acetylserine.

The protein belongs to the F-actin-capping protein beta subunit family. In terms of assembly, component of the F-actin capping complex, composed of a heterodimer of an alpha and a beta subunit. Component of the WASH complex. As to quaternary structure, component of the F-actin capping complex, composed of a heterodimer of an alpha and a beta subunit. Subunit of dynactin, a multiprotein complex part of a tripartite complex with dynein and a adapter, such as BICDL1, BICD2 or HOOK3. The dynactin complex is built around ACTR1A/ACTB filament and consists of an actin-related filament composed of a shoulder domain, a pointed end and a barbed end. Its length is defined by its flexible shoulder domain. Isoform 1 is detected in pectoral muscle, cardiac muscle and gizzard. Isoform 2 is detected in brain and liver (at protein level). Isoform 2 is the predominant isoform of nonmuscle tissues and isoform 1 is the predominant isoform of muscle tissues.

It localises to the cytoplasm. The protein localises to the myofibril. The protein resides in the sarcomere. Its subcellular location is the z line. It is found in the i band. It localises to the cytoskeleton. Its function is as follows. F-actin-capping proteins bind in a Ca(2+)-independent manner to the fast growing ends of actin filaments (barbed end) thereby blocking the exchange of subunits at these ends. Unlike other capping proteins (such as gelsolin and severin), these proteins do not sever actin filaments. May play a role in the regulation of cell morphology and cytoskeletal organization. Forms, with CAPZB, the barbed end of the fast growing ends of actin filaments in the dynactin complex and stabilizes dynactin structure. The dynactin multiprotein complex activates the molecular motor dynein for ultra-processive transport along microtubules. This is F-actin-capping protein subunit beta isoforms 1 and 2 (CAPZB) from Gallus gallus (Chicken).